A 444-amino-acid polypeptide reads, in one-letter code: DNA repair protein RadA (444 aa).

The C4-type zinc-finger motif lies at 10-27; sequence CQECGYKSVKWLGKCPSC. Residue 91 to 98 participates in ATP binding; the sequence is GEPGIGKS. Positions 247 to 251 match the RadA KNRFG motif motif; that stretch reads KNRFG. Residues 345–444 are lon-protease-like; sequence DVFVNVAGGM…HIQEAIEVLF (100 aa).

This sequence belongs to the RecA family. RadA subfamily.

In terms of biological role, DNA-dependent ATPase involved in processing of recombination intermediates, plays a role in repairing DNA breaks. Stimulates the branch migration of RecA-mediated strand transfer reactions, allowing the 3' invading strand to extend heteroduplex DNA faster. Binds ssDNA in the presence of ADP but not other nucleotides, has ATPase activity that is stimulated by ssDNA and various branched DNA structures, but inhibited by SSB. Does not have RecA's homology-searching function. The polypeptide is DNA repair protein RadA (Aquifex aeolicus (strain VF5)).